The following is a 529-amino-acid chain: Basal body-orientation factor 1 (529 aa).

Residues 1–13 (MPSKGKDKKKGKS) show a composition bias toward basic residues. A disordered region spans residues 1 to 22 (MPSKGKDKKKGKSKGKDTKKLI). Coiled-coil stretches lie at residues 85–201 (LKKQ…EAEK) and 271–361 (VKEK…EVER).

The protein belongs to the BBOF1 family. In terms of assembly, interacts with MNS1 and ODF2.

The protein resides in the cytoplasm. Its subcellular location is the cytoskeleton. The protein localises to the cilium basal body. It is found in the flagellum axoneme. Its function is as follows. Plays an essential role in sperm motility and male fertility by stabilizing the sperm flagellar axonemal structure. May be required for the stability of ODF2 and MANS1 proteins. Dispensable for the assembly and function of motile cilia. The sequence is that of Basal body-orientation factor 1 from Homo sapiens (Human).